The chain runs to 280 residues: Killer cell lectin-like receptor 7 (280 aa).

At 1–44 the chain is on the cytoplasmic side; the sequence is MSEQEVTYSTVRFHESSRLQKLVRTEEPQRPREACYREYSVPWK. Residues 45 to 66 traverse the membrane as a helical; Signal-anchor for type II membrane protein segment; sequence LIVIACGILCFLLLVTVALLAI. The Extracellular portion of the chain corresponds to 67–280; sequence TIFQHSQQKH…CGKRLDKFPH (214 aa). Asn-104 is a glycosylation site (N-linked (GlcNAc...) asparagine). The region spanning 156-275 is the C-type lectin domain; that stretch reads GFEKYWFCYG…SYICICGKRL (120 aa). 4 cysteine pairs are disulfide-bonded: Cys-163-Cys-168, Cys-181-Cys-269, Cys-185-Cys-271, and Cys-250-Cys-263. Asn-239 carries N-linked (GlcNAc...) asparagine glycosylation.

Homodimer; disulfide-linked.

It is found in the membrane. Its function is as follows. Receptor on natural killer (NK) cells for class I MHC. The polypeptide is Killer cell lectin-like receptor 7 (Klra7) (Mus musculus (Mouse)).